The following is a 177-amino-acid chain: Protein YOP1 (177 aa).

Residues 1-35 (MADVISSLQTQLKELDTKFAGNNVLNQLEQRTNLP) lie on the Cytoplasmic side of the membrane. The chain crosses the membrane as a helical span at residues 36–55 (KSYLVVGSTIFYLLLIFINV). Topologically, residues 56-57 (GG) are lumenal. The helical transmembrane segment at 58–78 (IGEILGNFAGFVIPAYYSILA) threads the bilayer. The Cytoplasmic segment spans residues 79 to 88 (LKTTTTKDDT). Residues 89–103 (QLLTYWIVFSFLNVI) form a helical membrane-spanning segment. The Lumenal portion of the chain corresponds to 104–108 (EFWSK). A helical membrane pass occupies residues 109-127 (ALLYIIPFYWFLKTIFLLY). Residues 128–177 (IALPQTGGATMIYNRFISPLTDKYILGPKKTDGVQQSVKEASRATGAATH) are Cytoplasmic-facing.

The protein belongs to the DP1 family. In terms of assembly, oligomer.

It localises to the endoplasmic reticulum membrane. Its subcellular location is the golgi apparatus membrane. Functionally, required to generate and maintain the structure of the tubular endoplasmic reticulum network and the vacuole. Induces high curvature in membranes and causes membrane tubule formation. Involved in membrane/vesicle trafficking. The chain is Protein YOP1 (YOP1) from Candida glabrata (strain ATCC 2001 / BCRC 20586 / JCM 3761 / NBRC 0622 / NRRL Y-65 / CBS 138) (Yeast).